The chain runs to 448 residues: N-succinylarginine dihydrolase (448 aa).

Substrate contacts are provided by residues 19–28 (GGLSYGNVAS), Asn110, and 137–138 (HR). Glu174 is an active-site residue. Arg214 serves as a coordination point for substrate. His250 is a catalytic residue. The substrate site is built by Asp252 and Asn365. Residue Cys371 is the Nucleophile of the active site.

This sequence belongs to the succinylarginine dihydrolase family. In terms of assembly, homodimer.

The enzyme catalyses N(2)-succinyl-L-arginine + 2 H2O + 2 H(+) = N(2)-succinyl-L-ornithine + 2 NH4(+) + CO2. Its pathway is amino-acid degradation; L-arginine degradation via AST pathway; L-glutamate and succinate from L-arginine: step 2/5. Functionally, catalyzes the hydrolysis of N(2)-succinylarginine into N(2)-succinylornithine, ammonia and CO(2). The protein is N-succinylarginine dihydrolase of Pseudomonas syringae pv. syringae (strain B728a).